A 345-amino-acid chain; its full sequence is Phosphoribosylformylglycinamidine cyclo-ligase (345 aa).

The protein belongs to the AIR synthase family.

Its subcellular location is the cytoplasm. The catalysed reaction is 2-formamido-N(1)-(5-O-phospho-beta-D-ribosyl)acetamidine + ATP = 5-amino-1-(5-phospho-beta-D-ribosyl)imidazole + ADP + phosphate + H(+). It participates in purine metabolism; IMP biosynthesis via de novo pathway; 5-amino-1-(5-phospho-D-ribosyl)imidazole from N(2)-formyl-N(1)-(5-phospho-D-ribosyl)glycinamide: step 2/2. The sequence is that of Phosphoribosylformylglycinamidine cyclo-ligase from Escherichia coli (strain K12 / MC4100 / BW2952).